Consider the following 92-residue polypeptide: C-C motif chemokine 3 (92 aa).

The first 19 residues, 1 to 19, serve as a signal peptide directing secretion; the sequence is MKVPGAALAVLLCTMSLCS. 2 disulfide bridges follow: C33/C57 and C34/C73.

It belongs to the intercrine beta (chemokine CC) family. Self-associates. Also heterodimer of MIP-1-alpha(4-69) and MIP-1-beta(3-69). Interacts with CCR1.

The protein localises to the secreted. Functionally, monokine with inflammatory and chemokinetic properties. Binds to CCR1, CCR4 and CCR5. One of the major HIV-suppressive factors produced by CD8+ T-cells. Recombinant MIP-1-alpha induces a dose-dependent inhibition of different strains of HIV-1, HIV-2, and simian immunodeficiency virus (SIV). The polypeptide is C-C motif chemokine 3 (CCL3) (Canis lupus familiaris (Dog)).